The following is a 795-amino-acid chain: Phenylalanine--tRNA ligase beta subunit (795 aa).

Positions 39–148 constitute a tRNA-binding domain; the sequence is AGSFHGVVVG…ADAPIGTDIR (110 aa). The B5 domain maps to 401 to 476; the sequence is PKRATITLRR…RVYGYNNIPD (76 aa). 4 residues coordinate Mg(2+): Asp-454, Asp-460, Glu-463, and Glu-464. Residues 701–794 enclose the FDX-ACB domain; it reads SRFPANRRDI…LKERFQASLR (94 aa).

This sequence belongs to the phenylalanyl-tRNA synthetase beta subunit family. Type 1 subfamily. As to quaternary structure, tetramer of two alpha and two beta subunits. It depends on Mg(2+) as a cofactor.

The protein resides in the cytoplasm. It catalyses the reaction tRNA(Phe) + L-phenylalanine + ATP = L-phenylalanyl-tRNA(Phe) + AMP + diphosphate + H(+). This Escherichia coli O157:H7 protein is Phenylalanine--tRNA ligase beta subunit.